The sequence spans 509 residues: Aromatase (509 aa).

Cys-437 lines the heme pocket.

The protein belongs to the cytochrome P450 family. Heme serves as cofactor.

It is found in the membrane. It catalyses the reaction testosterone + 3 reduced [NADPH--hemoprotein reductase] + 3 O2 = 17beta-estradiol + formate + 3 oxidized [NADPH--hemoprotein reductase] + 4 H2O + 4 H(+). The catalysed reaction is androst-4-ene-3,17-dione + 3 reduced [NADPH--hemoprotein reductase] + 3 O2 = estrone + formate + 3 oxidized [NADPH--hemoprotein reductase] + 4 H2O + 4 H(+). Functionally, catalyzes the formation of aromatic C18 estrogens from C19 androgens. The sequence is that of Aromatase (CYP19A1) from Taeniopygia guttata (Zebra finch).